Here is a 313-residue protein sequence, read N- to C-terminus: Ribosomal protein L11 methyltransferase (313 aa).

S-adenosyl-L-methionine is bound by residues Thr154, Gly179, Asp201, and Asn242.

This sequence belongs to the methyltransferase superfamily. PrmA family.

Its subcellular location is the cytoplasm. It catalyses the reaction L-lysyl-[protein] + 3 S-adenosyl-L-methionine = N(6),N(6),N(6)-trimethyl-L-lysyl-[protein] + 3 S-adenosyl-L-homocysteine + 3 H(+). Methylates ribosomal protein L11. This Xanthomonas oryzae pv. oryzae (strain MAFF 311018) protein is Ribosomal protein L11 methyltransferase.